The sequence spans 443 residues: Probable glucomannan 4-beta-mannosyltransferase 11 (443 aa).

Residue aspartate 52 is part of the active site. 2 residues coordinate substrate: aspartate 111 and aspartate 113. Aspartate 205 is a catalytic residue. Transmembrane regions (helical) follow at residues 284-304 (IIVH…SVFF), 321-341 (ITLF…FWVL), 400-420 (EMMV…FGKT), and 421-441 (VLYI…IGFI).

It belongs to the glycosyltransferase 2 family. Plant cellulose synthase-like A subfamily.

The protein resides in the golgi apparatus membrane. The catalysed reaction is GDP-mannose + (glucomannan)n = GDP + (glucomannan)n+1.. In terms of biological role, probable mannan synthase which consists of a 4-beta-mannosyltransferase activity on mannan using GDP-mannose. The beta-1,4-mannan product is the backbone for galactomannan synthesis by galactomannan galactosyltransferase. Galactomannan is a noncellulosic polysaccharides of plant cell wall. This chain is Probable glucomannan 4-beta-mannosyltransferase 11, found in Arabidopsis thaliana (Mouse-ear cress).